Consider the following 149-residue polypeptide: Large ribosomal subunit protein uL24 (149 aa).

This sequence belongs to the universal ribosomal protein uL24 family. As to quaternary structure, part of the 50S ribosomal subunit.

Its function is as follows. One of two assembly initiator proteins, it binds directly to the 5'-end of the 23S rRNA, where it nucleates assembly of the 50S subunit. Functionally, one of the proteins that surrounds the polypeptide exit tunnel on the outside of the subunit. The protein is Large ribosomal subunit protein uL24 of Nostoc sp. (strain PCC 7120 / SAG 25.82 / UTEX 2576).